We begin with the raw amino-acid sequence, 556 residues long: Formate--tetrahydrofolate ligase (556 aa).

65–72 (TPAGEGKS) serves as a coordination point for ATP.

This sequence belongs to the formate--tetrahydrofolate ligase family.

It carries out the reaction (6S)-5,6,7,8-tetrahydrofolate + formate + ATP = (6R)-10-formyltetrahydrofolate + ADP + phosphate. It participates in one-carbon metabolism; tetrahydrofolate interconversion. The protein is Formate--tetrahydrofolate ligase of Clostridium novyi (strain NT).